The chain runs to 339 residues: Ferrochelatase (339 aa).

Fe cation contacts are provided by H209 and E290.

This sequence belongs to the ferrochelatase family.

The protein resides in the cytoplasm. The enzyme catalyses heme b + 2 H(+) = protoporphyrin IX + Fe(2+). It functions in the pathway porphyrin-containing compound metabolism; protoheme biosynthesis; protoheme from protoporphyrin-IX: step 1/1. Functionally, catalyzes the ferrous insertion into protoporphyrin IX. In Rhizobium meliloti (strain 1021) (Ensifer meliloti), this protein is Ferrochelatase.